Here is a 447-residue protein sequence, read N- to C-terminus: N-succinylarginine dihydrolase (447 aa).

Residues 19–28, N110, and 137–138 each bind substrate; these read AGLSFGNEAS and HR. Residue E174 is part of the active site. R212 serves as a coordination point for substrate. Residue H248 is part of the active site. Substrate is bound by residues D250 and N359. Residue C365 is the Nucleophile of the active site.

It belongs to the succinylarginine dihydrolase family. In terms of assembly, homodimer.

The catalysed reaction is N(2)-succinyl-L-arginine + 2 H2O + 2 H(+) = N(2)-succinyl-L-ornithine + 2 NH4(+) + CO2. It participates in amino-acid degradation; L-arginine degradation via AST pathway; L-glutamate and succinate from L-arginine: step 2/5. Catalyzes the hydrolysis of N(2)-succinylarginine into N(2)-succinylornithine, ammonia and CO(2). The protein is N-succinylarginine dihydrolase of Salmonella heidelberg (strain SL476).